A 342-amino-acid polypeptide reads, in one-letter code: Ornithine carbamoyltransferase, catabolic (342 aa).

Residues 59-62 (STRT), serine 83, arginine 110, and 137-140 (HPTQ) contribute to the carbamoyl phosphate site. L-ornithine is bound by residues asparagine 169, aspartate 235, and 239-240 (SL). Carbamoyl phosphate contacts are provided by residues 276–277 (CL) and arginine 328.

It belongs to the aspartate/ornithine carbamoyltransferase superfamily. OTCase family. Dodecamer (tetramer of trimers).

The protein resides in the cytoplasm. It catalyses the reaction carbamoyl phosphate + L-ornithine = L-citrulline + phosphate + H(+). It functions in the pathway amino-acid degradation; L-arginine degradation via ADI pathway; carbamoyl phosphate from L-arginine: step 2/2. Its function is as follows. nvolved in the catabolism of arginine. Catalyzes the phosphorolysis of citrulline, the reverse reaction of the biosynthetic one, yielding ornithine and carbamoyl phosphate which serve to generate ATP from ADP. This chain is Ornithine carbamoyltransferase, catabolic (arcB), found in Malacoplasma penetrans (strain HF-2) (Mycoplasma penetrans).